We begin with the raw amino-acid sequence, 271 residues long: Urease accessory protein UreD (271 aa).

It belongs to the UreD family. UreD, UreF and UreG form a complex that acts as a GTP-hydrolysis-dependent molecular chaperone, activating the urease apoprotein by helping to assemble the nickel containing metallocenter of UreC. The UreE protein probably delivers the nickel.

The protein resides in the cytoplasm. Required for maturation of urease via the functional incorporation of the urease nickel metallocenter. This chain is Urease accessory protein UreD, found in Haemophilus influenzae (strain PittGG).